A 95-amino-acid polypeptide reads, in one-letter code: Small ribosomal subunit protein uS19 (95 aa).

The tract at residues 73–95 (EFSPTRSYRGHGADKNAKGSKKK) is disordered.

This sequence belongs to the universal ribosomal protein uS19 family.

Its function is as follows. Protein S19 forms a complex with S13 that binds strongly to the 16S ribosomal RNA. The protein is Small ribosomal subunit protein uS19 of Deinococcus deserti (strain DSM 17065 / CIP 109153 / LMG 22923 / VCD115).